The following is an 803-amino-acid chain: Ribonuclease II, chloroplastic/mitochondrial (803 aa).

The N-terminal 35 residues, 1–35, are a transit peptide targeting the chloroplast and mitochondrion; it reads MMSVRAINGCSIIRTATSAGGPPVSLFRHRIQRLR. One can recognise an RNB domain in the interval 399–694; it reads RIDLTHLKVY…AHYQIKAFLR (296 aa).

This sequence belongs to the RNR ribonuclease family. Expressed in seedlings, roots, leaves and flowers.

The protein localises to the mitochondrion. Its subcellular location is the plastid. The protein resides in the chloroplast. It carries out the reaction Exonucleolytic cleavage in the 3'- to 5'-direction to yield nucleoside 5'-phosphates.. Functionally, 3'-5' exoribonuclease that catalyzes 3' maturation of chloroplast and mitochondrion ribosomal RNAs; degrades short nucleotidic extensions to generate the mature 3'-ends. Involved in the maturation of 23S, 16S and 5S rRNAs. This Arabidopsis thaliana (Mouse-ear cress) protein is Ribonuclease II, chloroplastic/mitochondrial (RNR1).